We begin with the raw amino-acid sequence, 526 residues long: Tyrosine 2,3-aminomutase (526 aa).

Tyr41 serves as the catalytic Proton donor/acceptor. His71 contacts substrate. The 5-imidazolinone (Ala-Gly) cross-link spans 130–132 (ASG). At Ser131 the chain carries 2,3-didehydroalanine (Ser). Residues Asn183 and Arg288 each contribute to the substrate site.

Belongs to the TAL/TAM family. Homotetramer; dimer of dimers. Contains an active site 4-methylidene-imidazol-5-one (MIO), which is formed autocatalytically by cyclization and dehydration of residues Ala-Ser-Gly.

It carries out the reaction L-tyrosine = 3-amino-3-(4-hydroxyphenyl)propanoate. It catalyses the reaction L-tyrosine = (E)-4-coumarate + NH4(+). Its function is as follows. Has aminomutase and, to a much lesser extent, ammonia-lyase activity. Primarily, catalyzes the rearrangement of L-tyrosine to S-beta-tyrosine, which is probably incorporated into secondary metabolite myxovalargin. The aminomutase activity exclusively produces S-beta-tyrosine. This is Tyrosine 2,3-aminomutase from Myxococcus sp. (strain Mx-B0).